The primary structure comprises 297 residues: GTPase Era (297 aa).

The 169-residue stretch at 5–173 (RAGFVSFVGR…TTELMRLLPV (169 aa)) folds into the Era-type G domain. The interval 13–20 (GRPNVGKS) is G1. A GTP-binding site is contributed by 13–20 (GRPNVGKS). Residues 39 to 43 (QTTRR) form a G2 region. The tract at residues 60 to 63 (DTPG) is G3. GTP is bound by residues 60–64 (DTPGV) and 123–126 (TKID). The segment at 123-126 (TKID) is G4. The interval 152-154 (VSA) is G5. The 79-residue stretch at 205 to 283 (VEDELPHSLA…FLSIRVKVAK (79 aa)) folds into the KH type-2 domain.

Belongs to the TRAFAC class TrmE-Era-EngA-EngB-Septin-like GTPase superfamily. Era GTPase family. As to quaternary structure, monomer.

The protein resides in the cytoplasm. It is found in the cell membrane. An essential GTPase that binds both GDP and GTP, with rapid nucleotide exchange. Plays a role in 16S rRNA processing and 30S ribosomal subunit biogenesis and possibly also in cell cycle regulation and energy metabolism. The sequence is that of GTPase Era from Leifsonia xyli subsp. xyli (strain CTCB07).